Here is a 209-residue protein sequence, read N- to C-terminus: rRNA N(6)-adenosine-methyltransferase METTL5 (209 aa).

S-adenosyl-L-methionine is bound by residues Q28, T31, G59, C62, V64, D81, and 108–109 (DV).

This sequence belongs to the methyltransferase superfamily. PrmA family. In terms of assembly, heterodimer; heterodimerizes with TRMT112. As to expression, expressed from very early development (8 post-conceptual weeks) and expression persists through adulthood in multiple substructures of the brain, including the cerebellar cortex, hippocampus, and striatum.

It localises to the nucleus. The protein localises to the presynapse. The protein resides in the postsynapse. It carries out the reaction adenosine(1832) in 18S rRNA + S-adenosyl-L-methionine = N(6)-methyladenosine(1832) in 18S rRNA + S-adenosyl-L-homocysteine + H(+). RRNA N6-adenosine-methyltransferase activity is inhibited by zinc. Functionally, catalytic subunit of a heterodimer with TRMT112, which specifically methylates the 6th position of adenine in position 1832 of 18S rRNA. N6-methylation of adenine(1832) in 18S rRNA resides in the decoding center of 18S rRNA and is required for translation and embryonic stem cells (ESCs) pluripotency and differentiation. In Homo sapiens (Human), this protein is rRNA N(6)-adenosine-methyltransferase METTL5.